Consider the following 296-residue polypeptide: 110 kDa antigen (296 aa).

Residues 132 to 143 (EETQKTVEPEQI) form a 1; approximate repeat. Residues 132 to 296 (EETQKTVEPE…TQETQNTVEP (165 aa)) form a 13.5 X 12 AA approximate tandem repeats of E-E-T-Q-K-T-V-E-P-E-Q-T region. Positions 133–296 (ETQKTVEPEQ…TQETQNTVEP (164 aa)) are disordered. One copy of the 2; approximate repeat lies at 144–155 (EETQNTVEPEQT). Residues 156–167 (EETQKTVEPEQT) form repeat 3. Residues 168–179 (EETQNTVEPEQI) form a 4; approximate repeat. Copy 5 of the repeat occupies 180–191 (EETQKTVEPEQT). Positions 181–271 (ETQKTVEPEQ…QTEETQKTVE (91 aa)) are enriched in basic and acidic residues. The stretch at 192–203 (EEAQKTVEPEQT) is one 6; approximate repeat. 6 consecutive repeat copies span residues 204–215 (EETQKTVEPEQT), 216–227 (EETQKTVEPEQT), 228–239 (EETQKTVEPEQT), 240–251 (EETQKTVEPEQT), 252–263 (EETQKTVEPEQT), and 264–275 (EETQKTVEPEQT). One copy of the 13; approximate repeat lies at 276–287 (EETQNTVEPEPT). The segment covering 277–296 (ETQNTVEPEPTQETQNTVEP) has biased composition (polar residues). The 14; truncated repeat unit spans residues 288-293 (QETQNT).

This is 110 kDa antigen from Plasmodium knowlesi.